Here is a 734-residue protein sequence, read N- to C-terminus: Transcription factor EMB1444 (734 aa).

A disordered region spans residues 537–566; sequence QFPTSLEIPKKNKKRAKPGESSRPRPRDRQ. The short motif at 548–555 is the Nuclear localization signal element; the sequence is NKKRAKPG. The 50-residue stretch at 552–601 folds into the bHLH domain; it reads AKPGESSRPRPRDRQLIQDRIKELRELVPNGSKCSIDSLLECTIKHMLFL. Positions 553–566 are enriched in basic and acidic residues; sequence KPGESSRPRPRDRQ.

The protein belongs to the bHLH protein family. LHW subfamily. Homodimer.

It is found in the nucleus. Functionally, transcription factor that may regulate root development. This Arabidopsis thaliana (Mouse-ear cress) protein is Transcription factor EMB1444.